Consider the following 258-residue polypeptide: Regulatory protein RecX (258 aa).

This sequence belongs to the RecX family.

The protein resides in the cytoplasm. Modulates RecA activity. The polypeptide is Regulatory protein RecX (Streptococcus pyogenes serotype M3 (strain ATCC BAA-595 / MGAS315)).